The sequence spans 209 residues: Uracil phosphoribosyltransferase (209 aa).

5-phospho-alpha-D-ribose 1-diphosphate is bound by residues Arg-79, Arg-104, and 131–139 (DPMLATGGS). Residues Ile-194 and 199–201 (GDA) contribute to the uracil site. Residue Asp-200 participates in 5-phospho-alpha-D-ribose 1-diphosphate binding.

The protein belongs to the UPRTase family. Requires Mg(2+) as cofactor.

It catalyses the reaction UMP + diphosphate = 5-phospho-alpha-D-ribose 1-diphosphate + uracil. Its pathway is pyrimidine metabolism; UMP biosynthesis via salvage pathway; UMP from uracil: step 1/1. Allosterically activated by GTP. Its function is as follows. Catalyzes the conversion of uracil and 5-phospho-alpha-D-ribose 1-diphosphate (PRPP) to UMP and diphosphate. In Streptococcus salivarius, this protein is Uracil phosphoribosyltransferase.